Reading from the N-terminus, the 198-residue chain is tRNA (pseudouridine(54)-N(1))-methyltransferase (198 aa).

Residues L130, G153, 176–181 (LSPLEL), and C186 contribute to the S-adenosyl-L-methionine site.

This sequence belongs to the methyltransferase superfamily. TrmY family. As to quaternary structure, homodimer.

It localises to the cytoplasm. It catalyses the reaction pseudouridine(54) in tRNA + S-adenosyl-L-methionine = N(1)-methylpseudouridine(54) in tRNA + S-adenosyl-L-homocysteine + H(+). In terms of biological role, specifically catalyzes the N1-methylation of pseudouridine at position 54 (Psi54) in tRNAs. This Methanococcus vannielii (strain ATCC 35089 / DSM 1224 / JCM 13029 / OCM 148 / SB) protein is tRNA (pseudouridine(54)-N(1))-methyltransferase.